We begin with the raw amino-acid sequence, 101 residues long: Protein RnfH (101 aa).

The protein belongs to the UPF0125 (RnfH) family.

This Pseudomonas aeruginosa (strain UCBPP-PA14) protein is Protein RnfH.